A 162-amino-acid polypeptide reads, in one-letter code: NADH-quinone oxidoreductase subunit I (162 aa).

2 4Fe-4S ferredoxin-type domains span residues 54-83 and 93-122; these read RRYENGEERCIACKLCEAVCPALAITIESE and TRYDIDLTKCIFCGFCEESCPVDSIVETQI. [4Fe-4S] cluster is bound by residues C63, C66, C69, C73, C102, C105, C108, and C112.

This sequence belongs to the complex I 23 kDa subunit family. NDH-1 is composed of 14 different subunits. Subunits NuoA, H, J, K, L, M, N constitute the membrane sector of the complex. The cofactor is [4Fe-4S] cluster.

It is found in the cell inner membrane. The catalysed reaction is a quinone + NADH + 5 H(+)(in) = a quinol + NAD(+) + 4 H(+)(out). Functionally, NDH-1 shuttles electrons from NADH, via FMN and iron-sulfur (Fe-S) centers, to quinones in the respiratory chain. The immediate electron acceptor for the enzyme in this species is believed to be ubiquinone. Couples the redox reaction to proton translocation (for every two electrons transferred, four hydrogen ions are translocated across the cytoplasmic membrane), and thus conserves the redox energy in a proton gradient. This is NADH-quinone oxidoreductase subunit I from Burkholderia ambifaria (strain MC40-6).